A 133-amino-acid chain; its full sequence is UPF0102 protein bll0669 (133 aa).

This sequence belongs to the UPF0102 family.

The sequence is that of UPF0102 protein bll0669 from Bradyrhizobium diazoefficiens (strain JCM 10833 / BCRC 13528 / IAM 13628 / NBRC 14792 / USDA 110).